A 344-amino-acid polypeptide reads, in one-letter code: [LysW]-L-2-aminoadipate 6-phosphate reductase (344 aa).

Residues 12 to 15 (SGYA), 36 to 38 (SRR), and leucine 75 contribute to the NADP(+) site. The active site involves cysteine 148. 3 residues coordinate NADP(+): serine 180, alanine 184, and asparagine 312.

The protein belongs to the NAGSA dehydrogenase family. Type 1 subfamily. LysY sub-subfamily. As to quaternary structure, homotetramer. Interacts with LysW. May form a ternary complex with LysW and LysZ.

Its subcellular location is the cytoplasm. The enzyme catalyses [amino-group carrier protein]-C-terminal-N-(1-carboxy-5-oxopentan-1-yl)-L-glutamine + phosphate + NADP(+) = [amino-group carrier protein]-C-terminal-N-(1-carboxy-5-phosphooxy-5-oxopentan-1-yl)-L-glutamine + NADPH + H(+). Its pathway is amino-acid biosynthesis; L-lysine biosynthesis via AAA pathway; L-lysine from L-alpha-aminoadipate (Thermus route): step 3/5. Functionally, catalyzes the NADPH-dependent reduction of [LysW]-aminoadipate 6-phosphate to yield [LysW]-aminoadipate 6-semialdehyde. This chain is [LysW]-L-2-aminoadipate 6-phosphate reductase, found in Thermus thermophilus (strain ATCC BAA-163 / DSM 7039 / HB27).